A 77-amino-acid chain; its full sequence is Small ribosomal subunit protein bS18 (77 aa).

It belongs to the bacterial ribosomal protein bS18 family. In terms of assembly, part of the 30S ribosomal subunit. Forms a tight heterodimer with protein bS6.

In terms of biological role, binds as a heterodimer with protein bS6 to the central domain of the 16S rRNA, where it helps stabilize the platform of the 30S subunit. In Lactobacillus helveticus (strain DPC 4571), this protein is Small ribosomal subunit protein bS18.